The following is a 339-amino-acid chain: Dihydroorotate dehydrogenase (quinone) (339 aa).

Residues 62 to 66 (AGMDK) and T86 each bind FMN. Position 66 (K66) interacts with substrate. A substrate-binding site is contributed by 111-115 (NRMGF). Positions 139 and 172 each coordinate FMN. N172 serves as a coordination point for substrate. The Nucleophile role is filled by S175. N177 is a substrate binding site. FMN contacts are provided by K217 and T245. 246 to 247 (NT) contributes to the substrate binding site. Residues G268, G297, and 318–319 (FS) each bind FMN.

Belongs to the dihydroorotate dehydrogenase family. Type 2 subfamily. As to quaternary structure, monomer. FMN is required as a cofactor.

It localises to the cell membrane. The enzyme catalyses (S)-dihydroorotate + a quinone = orotate + a quinol. It functions in the pathway pyrimidine metabolism; UMP biosynthesis via de novo pathway; orotate from (S)-dihydroorotate (quinone route): step 1/1. In terms of biological role, catalyzes the conversion of dihydroorotate to orotate with quinone as electron acceptor. The protein is Dihydroorotate dehydrogenase (quinone) of Shewanella halifaxensis (strain HAW-EB4).